Consider the following 192-residue polypeptide: Capsid protein (192 aa).

The tract at residues 1 to 30 (MEDSQPIKVRQPSISAPGTHLSPNPGQQSP) is disordered. Positions 12 to 30 (PSISAPGTHLSPNPGQQSP) are enriched in polar residues.

This sequence belongs to the tymoviruses capsid protein family.

It is found in the virion. Its function is as follows. Self-assembles to form a T=3 icosahedral capsid composed of 180 copies of the capsid protein. The capsid encapsulates the single-stranded RNA genome. This is Capsid protein from Ononis.